The sequence spans 456 residues: MRAGPRRQHLLPPQDNRAAVGYQRQDPVIPPQRDLDDRETLVSEHEHKEKTCQSAALFNVVNSIIGSGIIDFSLILLIKGGALSGTDTYQSLVNKTFGFPGYILLSVLQFLYPFIAMISYNIIAGDTLSKVFQRIPGVDPENVFIGRHFIIGLSTVTFTLPLSLYRNIAKLGKVSLISTGLTTLILGIVMARAISLGPHIPKTEDAWVFAKPNAIQAVGVMSFAFICHHNSFLVYSSLEEPTVAKWSRLIHMSIVISVFICIFFATCGYLTFTGFTQGDLFENYCRNDDLVTFGRFCYGVTVILTYPMECFVTREVIANVFFGGNLSSVFHIVVTVMVITVATLVSLLIDCLGIVLELNGVLCATPLIFIIPSACYLKLSEEPRTHSDKIMSYVMLPIGAAVMVFGFVMAITNPQDCTHGQEMFYCFPDNFSLTNTSESHIQQTTQLSILNISIFQ.

Positions 1–25 (MRAGPRRQHLLPPQDNRAAVGYQRQ) are disordered. A helical membrane pass occupies residues 58–78 (FNVVNSIIGSGIIDFSLILLI). Asn-94 is a glycosylation site (N-linked (GlcNAc...) asparagine). A run of 6 helical transmembrane segments spans residues 98–118 (GFPG…IAMI), 143–163 (VFIG…LPLS), 171–191 (LGKV…IVMA), 206–226 (AWVF…FAFI), 252–272 (MSIV…YLTF), and 291–313 (VTFG…CFVT). Asn-325 is a glycosylation site (N-linked (GlcNAc...) asparagine). Transmembrane regions (helical) follow at residues 329–349 (VFHI…SLLI), 351–371 (CLGI…IFII), and 390–410 (IMSY…FVMA).

The protein belongs to the amino acid/polyamine transporter 2 family.

Its subcellular location is the membrane. In terms of biological role, putative sodium-dependent amino acid/proton antiporter. The chain is Putative sodium-coupled neutral amino acid transporter 11 (SLC38A11) from Macaca fascicularis (Crab-eating macaque).